The following is a 643-amino-acid chain: 3D-(3,5/4)-trihydroxycyclohexane-1,2-dione hydrolase (643 aa).

E65 contacts thiamine diphosphate. A thiamine pyrophosphate binding region spans residues 441–521 (SLPGDLQRMW…VNVLLFDNCG (81 aa)). The Mg(2+) site is built by D492 and N519.

The protein belongs to the TPP enzyme family. Mg(2+) serves as cofactor. It depends on thiamine diphosphate as a cofactor.

It catalyses the reaction 3D-3,5/4-trihydroxycyclohexane-1,2-dione + H2O = 5-deoxy-D-glucuronate + H(+). It participates in polyol metabolism; myo-inositol degradation into acetyl-CoA; acetyl-CoA from myo-inositol: step 3/7. Involved in the cleavage of the C1-C2 bond of 3D-(3,5/4)-trihydroxycyclohexane-1,2-dione (THcHDO) to yield 5-deoxy-glucuronate (5DG). The chain is 3D-(3,5/4)-trihydroxycyclohexane-1,2-dione hydrolase from Clostridium botulinum (strain Eklund 17B / Type B).